The primary structure comprises 386 residues: Succinate--CoA ligase [ADP-forming] subunit beta (386 aa).

Residues 9–244 enclose the ATP-grasp domain; the sequence is KEIFRKYGVP…LAEEEPREIQ (236 aa). ATP-binding positions include K46, 53 to 55, E99, L102, and E107; that span reads GRG. N199 and D213 together coordinate Mg(2+). Residues N264 and 321-323 contribute to the substrate site; that span reads GIM.

This sequence belongs to the succinate/malate CoA ligase beta subunit family. In terms of assembly, heterotetramer of two alpha and two beta subunits. It depends on Mg(2+) as a cofactor.

It catalyses the reaction succinate + ATP + CoA = succinyl-CoA + ADP + phosphate. The catalysed reaction is GTP + succinate + CoA = succinyl-CoA + GDP + phosphate. Its pathway is carbohydrate metabolism; tricarboxylic acid cycle; succinate from succinyl-CoA (ligase route): step 1/1. Functionally, succinyl-CoA synthetase functions in the citric acid cycle (TCA), coupling the hydrolysis of succinyl-CoA to the synthesis of either ATP or GTP and thus represents the only step of substrate-level phosphorylation in the TCA. The beta subunit provides nucleotide specificity of the enzyme and binds the substrate succinate, while the binding sites for coenzyme A and phosphate are found in the alpha subunit. The sequence is that of Succinate--CoA ligase [ADP-forming] subunit beta from Myxococcus xanthus (strain DK1622).